The primary structure comprises 192 residues: Leucine-rich repeat-containing protein 51 (192 aa).

LRR repeat units lie at residues 49–71 (SLTQSLWLNNNVLNDLRDFNQVA), 80–101 (NLAWIDLSFNDLTSIDPVLTTF), and 103–124 (NLSVLYLHGNSIQHLGEVNKLA). One can recognise an LRRCT domain in the interval 137 to 175 (NPMEEEKGYRQYVLCTLPHITTFDFSGVTKADRTTAEVW).

Its subcellular location is the cytoplasm. The chain is Leucine-rich repeat-containing protein 51 from Macaca mulatta (Rhesus macaque).